A 46-amino-acid polypeptide reads, in one-letter code: U-limacoditoxin(6)-Dv61 (46 aa).

The first 19 residues, 1–19 (MSKLLVLLMTTALATLAQA), serve as a signal peptide directing secretion.

The protein belongs to the limacoditoxin-6 family. As to expression, expressed by the venom secretory cell of the spine. The spine is a cuticular structure containing a single large nucleated venom-secreting cell at its base. It is an independent unit capable of producing, storing and injecting venom. On the back of D.vulnerans caterpillars, spines are grouped together by 50 to 100 to form scoli, of which there are eight in D.vulnerans.

The protein resides in the secreted. Probable toxin. Does not show insecticidal, antimicrobial and antiparasitic activities. Does not induce increase in intracellular calcium in mouse DRG neurons, suggesting that it does not induce pain. In Doratifera vulnerans (Mottled cup moth), this protein is U-limacoditoxin(6)-Dv61.